Here is a 214-residue protein sequence, read N- to C-terminus: Nucleoside triphosphate pyrophosphatase (214 aa).

The active-site Proton acceptor is the Asp79.

The protein belongs to the Maf family. It depends on a divalent metal cation as a cofactor.

It is found in the cytoplasm. It carries out the reaction a ribonucleoside 5'-triphosphate + H2O = a ribonucleoside 5'-phosphate + diphosphate + H(+). It catalyses the reaction a 2'-deoxyribonucleoside 5'-triphosphate + H2O = a 2'-deoxyribonucleoside 5'-phosphate + diphosphate + H(+). Functionally, nucleoside triphosphate pyrophosphatase. May have a dual role in cell division arrest and in preventing the incorporation of modified nucleotides into cellular nucleic acids. In Rhodococcus jostii (strain RHA1), this protein is Nucleoside triphosphate pyrophosphatase.